The following is a 726-amino-acid chain: MDPIRFGLSRVPFAHCYNKRVIFRANYLVPLTWLKNNVAYKSTNTLLLPTPNAEYYSTSKLSSQVNVSLNSLSQKASSGSKIYPFKNSFPLPFSRSILPIRSLAFLKLCVRHNSTVPSKDEQAQDISKINTNGTLQTPNKKVNVFRLFTLARGQGWNFFIAGSLLLVSSGVTMSIPYIVGKILDAGSSGDSSVTHIMGIPSGTFYIGLLGLFFLGSACNFGRIITLRLLSERIVSRLRARLFAKCMSLDGAFFDFHKHGDLISRLTTDSSIVGKSLSMYLSDGLRSSVSAIAGIGMMLYVSMRLTGYMSLIVPPIALGAFFYGEYVRKLSRTTQDALGDLTRVSEEKLANVRTTQAFLGERQEVNRYNDYIRNLFVLAKREAFASGIFFGSTGFLGNATVIAILALGGRMVAAGDITVGQLSSFLLYTVYAGGSIVGLSGCFTDIMKGLGAASRLFELLDAKPKIAPTVGIPVPVTVGKAILSFRNVGFAYPTRPSASIFDNLSFDIHPGTNVAIVAPSGGGKSTISQLLLRFYAPSSGKILADGVDISTYNVHQWRSHFGLVGQEPVLFSGTIGENIAYGKSNASQEEIEDAAKRANCSFVLSFPEKWSTQVGTRGLQLSGGQKQRIAIARALLRNPAFLILDEATSALDGEAEVMVDKTIQSLMHNRSMTTITIAHKLATIRRADQIIVVGDGKVLEQGSFERLSRPGTNFYKLMRWQLGKVEP.

Residues 1–112 (MDPIRFGLSR…LAFLKLCVRH (112 aa)) constitute a mitochondrion transit peptide. Residues Asn66, Asn113, and Asn132 are each glycosylated (N-linked (GlcNAc...) asparagine). 5 consecutive transmembrane segments (helical) span residues 158 to 178 (FFIA…IPYI), 196 to 216 (IMGI…FLGS), 306 to 326 (GYMS…GEYV), 386 to 406 (GIFF…ILAL), and 423 to 443 (SFLL…GCFT). The 290-residue stretch at 158–447 (FFIAGSLLLV…LSGCFTDIMK (290 aa)) folds into the ABC transmembrane type-1 domain. Residues 482–719 (LSFRNVGFAY…GTNFYKLMRW (238 aa)) enclose the ABC transporter domain. N-linked (GlcNAc...) asparagine glycosylation is present at Asn502. 517 to 524 (APSGGGKS) provides a ligand contact to ATP. N-linked (GlcNAc...) asparagine glycosylation is found at Asn584, Asn598, and Asn668.

Belongs to the ABC transporter superfamily. ABCB family. Mitochondrial peptide exporter (TC 3.A.1.212) subfamily.

The protein resides in the mitochondrion inner membrane. In terms of biological role, mediates export of peptides generated upon proteolysis of mitochondrial inner membrane proteins. This Schizosaccharomyces pombe (strain 972 / ATCC 24843) (Fission yeast) protein is ATP-dependent permease MDL1, mitochondrial (mdl1).